We begin with the raw amino-acid sequence, 631 residues long: Chaperone protein HtpG (631 aa).

Residues 1–339 (MSTNQETRGF…SNDLPLNVSR (339 aa)) are a; substrate-binding. A b region spans residues 340 to 555 (EILQDNKVTS…DDQMTTQMAK (216 aa)). Residues 556 to 631 (LFAAAGQAMP…NTLLSKLTSH (76 aa)) form a c region.

It belongs to the heat shock protein 90 family. Homodimer.

The protein localises to the cytoplasm. Its function is as follows. Molecular chaperone. Has ATPase activity. This is Chaperone protein HtpG from Pasteurella multocida (strain Pm70).